A 366-amino-acid chain; its full sequence is Chorismate synthase (366 aa).

Residues Arg-48 and Arg-54 each coordinate NADP(+). Residues 125 to 127 (RSS), 238 to 239 (NA), Gly-278, 293 to 297 (KPTSS), and Arg-319 contribute to the FMN site.

Belongs to the chorismate synthase family. As to quaternary structure, homotetramer. FMNH2 serves as cofactor.

The enzyme catalyses 5-O-(1-carboxyvinyl)-3-phosphoshikimate = chorismate + phosphate. It participates in metabolic intermediate biosynthesis; chorismate biosynthesis; chorismate from D-erythrose 4-phosphate and phosphoenolpyruvate: step 7/7. Functionally, catalyzes the anti-1,4-elimination of the C-3 phosphate and the C-6 proR hydrogen from 5-enolpyruvylshikimate-3-phosphate (EPSP) to yield chorismate, which is the branch point compound that serves as the starting substrate for the three terminal pathways of aromatic amino acid biosynthesis. This reaction introduces a second double bond into the aromatic ring system. The polypeptide is Chorismate synthase (Thiobacillus denitrificans (strain ATCC 25259 / T1)).